A 145-amino-acid chain; its full sequence is Large ribosomal subunit protein uL16 (145 aa).

It belongs to the universal ribosomal protein uL16 family. As to quaternary structure, part of the 50S ribosomal subunit.

Binds 23S rRNA and is also seen to make contacts with the A and possibly P site tRNAs. The chain is Large ribosomal subunit protein uL16 from Shouchella clausii (strain KSM-K16) (Alkalihalobacillus clausii).